Here is a 240-residue protein sequence, read N- to C-terminus: LexA repressor (240 aa).

A DNA-binding region (H-T-H motif) is located at residues 26-46; the sequence is FDEMKDALDLASKSGIHRLIT. Catalysis depends on for autocatalytic cleavage activity residues Ser-160 and Lys-198.

Belongs to the peptidase S24 family. Homodimer.

The enzyme catalyses Hydrolysis of Ala-|-Gly bond in repressor LexA.. In terms of biological role, represses a number of genes involved in the response to DNA damage (SOS response), including recA and lexA. In the presence of single-stranded DNA, RecA interacts with LexA causing an autocatalytic cleavage which disrupts the DNA-binding part of LexA, leading to derepression of the SOS regulon and eventually DNA repair. The sequence is that of LexA repressor from Agrobacterium fabrum (strain C58 / ATCC 33970) (Agrobacterium tumefaciens (strain C58)).